The following is a 188-amino-acid chain: Putative nucleotidase OB0422 (188 aa).

It belongs to the 5'(3')-deoxyribonucleotidase family.

The protein is Putative nucleotidase OB0422 of Oceanobacillus iheyensis (strain DSM 14371 / CIP 107618 / JCM 11309 / KCTC 3954 / HTE831).